We begin with the raw amino-acid sequence, 504 residues long: Glucose-6-phosphate isomerase (504 aa).

Glutamate 333 serves as the catalytic Proton donor. Catalysis depends on residues histidine 364 and lysine 473.

The protein belongs to the GPI family.

Its subcellular location is the cytoplasm. It catalyses the reaction alpha-D-glucose 6-phosphate = beta-D-fructose 6-phosphate. Its pathway is carbohydrate biosynthesis; gluconeogenesis. It functions in the pathway carbohydrate degradation; glycolysis; D-glyceraldehyde 3-phosphate and glycerone phosphate from D-glucose: step 2/4. Functionally, catalyzes the reversible isomerization of glucose-6-phosphate to fructose-6-phosphate. In Stenotrophomonas maltophilia (strain R551-3), this protein is Glucose-6-phosphate isomerase.